We begin with the raw amino-acid sequence, 474 residues long: Nitrosuccinate lyase (474 aa).

The active-site Proton acceptor is the Ser295. Residues Lys301 and Asn303 each coordinate fumarate. Catalysis depends on Arg334, which acts as the Proton donor.

It belongs to the class-II fumarase/aspartase family.

It catalyses the reaction 2-nitrobutanedioate = fumarate + nitrite + H(+). Functionally, involved in the biosynthesis of desferrioxamine derivatives which have iron-binding properties and may act as siderophores. Catalyzes the formation of nitrous acid from nitrosuccinic acid (2-nitrobutanedioate) by elimination of its nitro group. The polypeptide is Nitrosuccinate lyase (Streptomyces davaonensis (strain DSM 101723 / JCM 4913 / KCC S-0913 / 768)).